The sequence spans 147 residues: Peptidyl-lysine N-acetyltransferase YjaB (147 aa).

Residues 3 to 144 form the N-acetyltransferase domain; the sequence is ISIRRSRHEE…KPYPLLNLAY (142 aa).

It belongs to the acetyltransferase family.

The enzyme catalyses L-lysyl-[protein] + acetyl-CoA = N(6)-acetyl-L-lysyl-[protein] + CoA + H(+). Its function is as follows. N-epsilon-lysine acetyltransferase that catalyzes acetylation of a large number of proteins. Binds acetyl-CoA. This chain is Peptidyl-lysine N-acetyltransferase YjaB (yjaB), found in Escherichia coli (strain K12).